The following is a 154-amino-acid chain: ATP synthase subunit b (154 aa).

The helical transmembrane segment at 9–29 threads the bilayer; sequence AIAFVIFVWFCMKYVWPPLMA.

Belongs to the ATPase B chain family. As to quaternary structure, F-type ATPases have 2 components, F(1) - the catalytic core - and F(0) - the membrane proton channel. F(1) has five subunits: alpha(3), beta(3), gamma(1), delta(1), epsilon(1). F(0) has three main subunits: a(1), b(2) and c(10-14). The alpha and beta chains form an alternating ring which encloses part of the gamma chain. F(1) is attached to F(0) by a central stalk formed by the gamma and epsilon chains, while a peripheral stalk is formed by the delta and b chains.

The protein resides in the cell inner membrane. Its function is as follows. F(1)F(0) ATP synthase produces ATP from ADP in the presence of a proton or sodium gradient. F-type ATPases consist of two structural domains, F(1) containing the extramembraneous catalytic core and F(0) containing the membrane proton channel, linked together by a central stalk and a peripheral stalk. During catalysis, ATP synthesis in the catalytic domain of F(1) is coupled via a rotary mechanism of the central stalk subunits to proton translocation. Component of the F(0) channel, it forms part of the peripheral stalk, linking F(1) to F(0). This is ATP synthase subunit b from Klebsiella pneumoniae subsp. pneumoniae (strain ATCC 700721 / MGH 78578).